The chain runs to 231 residues: Ion-translocating oxidoreductase complex subunit E (231 aa).

Transmembrane regions (helical) follow at residues 18 to 38, 39 to 59, 63 to 83, 86 to 106, 125 to 145, and 182 to 202; these read ALVQ…ATNA, LGLG…ISTL, TPAE…VSAV, LINA…PLIV, ALSA…MFVL, and PFLL…MLAG.

This sequence belongs to the NqrDE/RnfAE family. As to quaternary structure, the complex is composed of six subunits: RsxA, RsxB, RsxC, RsxD, RsxE and RsxG.

It is found in the cell inner membrane. Part of a membrane-bound complex that couples electron transfer with translocation of ions across the membrane. Required to maintain the reduced state of SoxR. This Shigella flexneri serotype 5b (strain 8401) protein is Ion-translocating oxidoreductase complex subunit E.